Reading from the N-terminus, the 117-residue chain is Large ribosomal subunit protein bL19 (117 aa).

This sequence belongs to the bacterial ribosomal protein bL19 family.

Its function is as follows. This protein is located at the 30S-50S ribosomal subunit interface and may play a role in the structure and function of the aminoacyl-tRNA binding site. The protein is Large ribosomal subunit protein bL19 of Shewanella woodyi (strain ATCC 51908 / MS32).